The chain runs to 216 residues: Regulator of G-protein signaling 19 (216 aa).

Residues 1-19 are compositionally biased toward basic and acidic residues; that stretch reads MPTPHEAEKQHTGPEEADR. Residues 1 to 30 are disordered; it reads MPTPHEAEKQHTGPEEADRPPSMSSHDAAP. S24 and S97 each carry phosphoserine. Residues 90-206 form the RGS domain; that stretch reads SFDKLMHSPT…LTSPTYRSLL (117 aa). S151 carries the phosphoserine; by MAPK1 and MAPK3 modification. An interaction with GIPC region spans residues 207-216; that stretch reads LQGAPQSSEA.

Interacts with GIPC PDZ domain. Interacts with GNAO1. Post-translationally, fatty acylated. Heavily palmitoylated in the cysteine string motif. Phosphorylated, mainly on serine residues.

The protein localises to the membrane. Functionally, inhibits signal transduction by increasing the GTPase activity of G protein alpha subunits thereby driving them into their inactive GDP-bound form. Binds to G-alpha subfamily 1 members, with the order G(i)a3 &gt; G(i)a1 &gt; G(o)a &gt;&gt; G(z)a/G(i)a2. Activity on G(z)-alpha is inhibited by phosphorylation and palmitoylation of the G-protein. The chain is Regulator of G-protein signaling 19 (Rgs19) from Mus musculus (Mouse).